The primary structure comprises 639 residues: Polyvinylalcohol dehydrogenase (639 aa).

Positions 1 to 33 (MQQNIERNQVSMTTSRFVWGAVMALVALGSASA) are cleaved as a signal peptide. Residues 36–152 (LNLPDGAALY…TPDQWNGWGA (117 aa)) enclose the Cytochrome c domain. Heme contacts are provided by Cys49, Cys52, and His53.

Belongs to the bacterial PQQ dehydrogenase family. In terms of assembly, monomer. Pyrroloquinoline quinone is required as a cofactor.

The protein localises to the cytoplasm. The catalysed reaction is a polyvinyl alcohol + 2n Fe(III)-[cytochrome c] = an oxidized polyvinyl alcohol + 2n Fe(II)-[cytochrome c] + 2n H(+). Functionally, catalyzes the oxidation of polyvinyl alcohol (PVA) in the polyvinyl alcohol degradation pathway. This Pseudomonas sp protein is Polyvinylalcohol dehydrogenase (pvaA).